Reading from the N-terminus, the 159-residue chain is Phosphopantetheine adenylyltransferase (159 aa).

Ser-9 is a binding site for substrate. Residues Ser-9 to Phe-10 and His-17 each bind ATP. Residues Lys-41, Leu-73, and Lys-87 each contribute to the substrate site. Residues Gly-88 to Arg-90, Glu-98, and Tyr-123 to Ser-129 each bind ATP.

It belongs to the bacterial CoaD family. In terms of assembly, homohexamer. It depends on Mg(2+) as a cofactor.

The protein resides in the cytoplasm. It carries out the reaction (R)-4'-phosphopantetheine + ATP + H(+) = 3'-dephospho-CoA + diphosphate. It participates in cofactor biosynthesis; coenzyme A biosynthesis; CoA from (R)-pantothenate: step 4/5. In terms of biological role, reversibly transfers an adenylyl group from ATP to 4'-phosphopantetheine, yielding dephospho-CoA (dPCoA) and pyrophosphate. This Clostridium botulinum (strain Alaska E43 / Type E3) protein is Phosphopantetheine adenylyltransferase.